A 78-amino-acid polypeptide reads, in one-letter code: Large ribosomal subunit protein bL28 (78 aa).

Belongs to the bacterial ribosomal protein bL28 family.

The sequence is that of Large ribosomal subunit protein bL28 from Synechococcus sp. (strain CC9605).